A 593-amino-acid chain; its full sequence is Insulin-like growth factor 2 mRNA-binding protein 3-B (593 aa).

2 RRM domains span residues 2 to 75 (NKLY…HSVP) and 81 to 156 (RKLQ…YIPD). The segment at 159–208 (ATPQSPSQQLQQPQQQHPQGRRGFGQRGPARQGSPGAAARPKPQSEVPLR) is disordered. The span at 161–176 (PQSPSQQLQQPQQQHP) shows a compositional bias: low complexity. 2 consecutive KH domains span residues 204 to 269 (EVPL…CKII) and 285 to 352 (EIPL…EEEV). The segment covering 390–402 (SGMPPPSAGVSSP) has biased composition (low complexity). Positions 390-412 (SGMPPPSAGVSSPTTSASYPPFG) are disordered. 2 consecutive KH domains span residues 417-482 (SETV…QGRI) and 499-565 (KLEA…QRKI). A disordered region spans residues 571 to 593 (QVRRQQQQQQKTAQSGQPQPRRK).

It belongs to the RRM IMP/VICKZ family. In terms of assembly, homodimer and multimer. Associates with microtubules. Interaction with a translocation machinery protein TRAPA of the endoplasmic reticulum. Component of a mRNP complex, at least composed of DAZAP1, IGF2BP3, STAU and VgRBP60. The mRNP complex with DAZAP1, IGF2BP3, STAU and VgRBP60 is only found in the cytoplasm. Interacts with a hnRNP 1 related RNA transport protein VgRBP60 both in the nucleus (in an RNA-independent manner) and the cytoplasm (in an RNA-dependent manner). Found in a B3 activator complex. Expressed in oocytes, kidney and pancreas (at protein level). Expressed in oocytes, kidney and pancreas.

It is found in the nucleus. The protein resides in the cytoplasm. The protein localises to the endoplasmic reticulum. In terms of biological role, RNA-binding protein that acts as a regulator of mRNA transport and localization. Binds to the RNA sequence motif 5'-UUCAC-3'. Preferentially binds to N6-methyladenosine (m6A)-containing mRNAs and increases their stability. Mediates the specific association of Vg1 RNA to microtubules. May regulate mRNA translation. Binds specifically to the vegetal localization elements (VLE or VgLE) in the 3'-UTR of Vg1 and VegT mRNAs. Binds to the Vg1 and VegT mRNAs in both the nucleus and the cytoplasm. May regulate mRNA translation. Acts as a transcription regulator. Binds to the 5'-[TA]GGTTACT-3' motif within element 3 of the TFIIIA gene promoter. This Xenopus laevis (African clawed frog) protein is Insulin-like growth factor 2 mRNA-binding protein 3-B (igf2bp3-b).